A 447-amino-acid chain; its full sequence is ATP synthase subunit beta (447 aa).

147–154 provides a ligand contact to ATP; that stretch reads GGAGVGKT.

This sequence belongs to the ATPase alpha/beta chains family. F-type ATPases have 2 components, CF(1) - the catalytic core - and CF(0) - the membrane proton channel. CF(1) has five subunits: alpha(3), beta(3), gamma(1), delta(1), epsilon(1). CF(0) has three main subunits: a(1), b(2) and c(9-12). The alpha and beta chains form an alternating ring which encloses part of the gamma chain. CF(1) is attached to CF(0) by a central stalk formed by the gamma and epsilon chains, while a peripheral stalk is formed by the delta and b chains.

Its subcellular location is the cell membrane. The catalysed reaction is ATP + H2O + 4 H(+)(in) = ADP + phosphate + 5 H(+)(out). Functionally, produces ATP from ADP in the presence of a proton gradient across the membrane. The catalytic sites are hosted primarily by the beta subunits. The protein is ATP synthase subunit beta of Carsonella ruddii (strain PV).